Reading from the N-terminus, the 180-residue chain is Iron sulfur cluster assembly protein 1, mitochondrial (180 aa).

Belongs to the NifU family. As to quaternary structure, component of the core Fe-S cluster (ISC) assembly machinery. It depends on [2Fe-2S] cluster as a cofactor.

The protein localises to the mitochondrion matrix. It functions in the pathway cofactor biosynthesis; iron-sulfur cluster biosynthesis. In terms of biological role, scaffold protein for the de novo synthesis of iron-sulfur (Fe-S) clusters within mitochondria, which is required for maturation of both mitochondrial and cytoplasmic [2Fe-2S] and [4Fe-4S] proteins. First, a [2Fe-2S] cluster is transiently assembled on the scaffold protein ISU1. In a second step, the cluster is released from ISU1, transferred to a glutaredoxin, followed by the formation of mitochondrial [2Fe-2S] proteins, the synthesis of [4Fe-4S] clusters and their target-specific insertion into the recipient apoproteins. Cluster assembly on ISU1 depends on the function of the cysteine desulfurase complex NFS1-ISD11, which serves as the sulfur donor for cluster synthesis, the iron-binding protein frataxin as the putative iron donor, and the electron transfer chain comprised of ferredoxin reductase and ferredoxin, which receive their electrons from NADH. The protein is Iron sulfur cluster assembly protein 1, mitochondrial (ISU1) of Kluyveromyces lactis (strain ATCC 8585 / CBS 2359 / DSM 70799 / NBRC 1267 / NRRL Y-1140 / WM37) (Yeast).